Here is a 103-residue protein sequence, read N- to C-terminus: MTGRGKGGKGLGKGGAKRHRKVLRDNIQGITKPAIRRLARRGGVKRISGLIYEETRGVLKVFWQNVIRDAVTYTEHAKRKTVTAMDVVYALKRQGRTLYGFGG.

Over residues 1–14 (MTGRGKGGKGLGKG) the composition is skewed to gly residues. The segment at 1-20 (MTGRGKGGKGLGKGGAKRHR) is disordered. Residues Lys6 and Lys13 each carry the N6-acetyl-N6-methyllysine; alternate modification. Residues 17-21 (KRHRK) mediate DNA binding.

Belongs to the histone H4 family. In terms of assembly, the nucleosome is a histone octamer containing two molecules each of H2A, H2B, H3 and H4 assembled in one H3-H4 heterotetramer and two H2A-H2B heterodimers. The octamer wraps approximately 147 bp of DNA.

It is found in the nucleus. The protein resides in the chromosome. Its function is as follows. Core component of nucleosome. Nucleosomes wrap and compact DNA into chromatin, limiting DNA accessibility to the cellular machineries which require DNA as a template. Histones thereby play a central role in transcription regulation, DNA repair, DNA replication and chromosomal stability. DNA accessibility is regulated via a complex set of post-translational modifications of histones, also called histone code, and nucleosome remodeling. This is Histone H4 from Diadromus pulchellus (Parasitic wasp).